Consider the following 696-residue polypeptide: ATP-dependent zinc metalloprotease FtsH (696 aa).

Residues 1–29 (MWLQVTNCSTLHSSLSYCGANTLSDMAKN) lie on the Cytoplasmic side of the membrane. A helical transmembrane segment spans residues 30-50 (LILWLVIAVVLMSVFQSFGPS). Over 51 to 124 (DSAGRQVDYT…LGTPPEEPSL (74 aa)) the chain is Periplasmic. The chain crosses the membrane as a helical span at residues 125–145 (LASIFISWFPMLLLIGVWVFF). The Cytoplasmic portion of the chain corresponds to 146–696 (MRQMQGGGGG…APKEDDKPQA (551 aa)). 219 to 226 (GPPGTGKT) provides a ligand contact to ATP. A Zn(2+)-binding site is contributed by His441. Glu442 is an active-site residue. Positions 445 and 519 each coordinate Zn(2+). The segment at 627–696 (RAPKGWGDTD…APKEDDKPQA (70 aa)) is disordered. Over residues 650 to 696 (PEAKTESAPEAKAEANVETEEKPVAADSEELKPKAEQAPKEDDKPQA) the composition is skewed to basic and acidic residues.

In the central section; belongs to the AAA ATPase family. It in the C-terminal section; belongs to the peptidase M41 family. As to quaternary structure, homohexamer. Zn(2+) serves as cofactor.

It localises to the cell inner membrane. In terms of biological role, acts as a processive, ATP-dependent zinc metallopeptidase for both cytoplasmic and membrane proteins. Plays a role in the quality control of integral membrane proteins. The protein is ATP-dependent zinc metalloprotease FtsH of Photobacterium profundum (strain SS9).